The following is a 542-amino-acid chain: Amino-acid acetyltransferase, mitochondrial (542 aa).

The N-terminal 14 residues, 1–14, are a transit peptide targeting the mitochondrion; the sequence is MLFRRLLTTKVGYH. An N-acetyltransferase domain is found at 368–534; sequence AGSAQLPAHK…LREYITYVRD (167 aa).

Belongs to the acetyltransferase family.

The protein resides in the mitochondrion. It carries out the reaction L-glutamate + acetyl-CoA = N-acetyl-L-glutamate + CoA + H(+). It functions in the pathway amino-acid biosynthesis; L-arginine biosynthesis; N(2)-acetyl-L-ornithine from L-glutamate: step 1/4. Its function is as follows. N-acetylglutamate synthase involved in arginine biosynthesis. This chain is Amino-acid acetyltransferase, mitochondrial (ARG2), found in Eremothecium gossypii (strain ATCC 10895 / CBS 109.51 / FGSC 9923 / NRRL Y-1056) (Yeast).